A 705-amino-acid chain; its full sequence is Elongation factor G (705 aa).

The region spanning 6 to 282 (NKVRNIGIMA…AVVDFLPSPL (277 aa)) is the tr-type G domain. Residues 15–22 (AHIDAGKT), 79–83 (DTPGH), and 133–136 (NKMD) contribute to the GTP site.

Belongs to the TRAFAC class translation factor GTPase superfamily. Classic translation factor GTPase family. EF-G/EF-2 subfamily.

The protein localises to the cytoplasm. Its function is as follows. Catalyzes the GTP-dependent ribosomal translocation step during translation elongation. During this step, the ribosome changes from the pre-translocational (PRE) to the post-translocational (POST) state as the newly formed A-site-bound peptidyl-tRNA and P-site-bound deacylated tRNA move to the P and E sites, respectively. Catalyzes the coordinated movement of the two tRNA molecules, the mRNA and conformational changes in the ribosome. This chain is Elongation factor G, found in Corynebacterium glutamicum (strain ATCC 13032 / DSM 20300 / JCM 1318 / BCRC 11384 / CCUG 27702 / LMG 3730 / NBRC 12168 / NCIMB 10025 / NRRL B-2784 / 534).